Here is a 105-residue protein sequence, read N- to C-terminus: Large ribosomal subunit protein eL30 (105 aa).

Residues Lys-22, Lys-53, and Lys-83 each participate in a glycyl lysine isopeptide (Lys-Gly) (interchain with G-Cter in ubiquitin) cross-link.

Belongs to the eukaryotic ribosomal protein eL30 family. In terms of assembly, component of the large ribosomal subunit (LSU). Mature yeast ribosomes consist of a small (40S) and a large (60S) subunit. The 40S small subunit contains 1 molecule of ribosomal RNA (18S rRNA) and 33 different proteins (encoded by 57 genes). The large 60S subunit contains 3 rRNA molecules (25S, 5.8S and 5S rRNA) and 46 different proteins (encoded by 81 genes).

The protein resides in the cytoplasm. In terms of biological role, component of the ribosome, a large ribonucleoprotein complex responsible for the synthesis of proteins in the cell. The small ribosomal subunit (SSU) binds messenger RNAs (mRNAs) and translates the encoded message by selecting cognate aminoacyl-transfer RNA (tRNA) molecules. The large subunit (LSU) contains the ribosomal catalytic site termed the peptidyl transferase center (PTC), which catalyzes the formation of peptide bonds, thereby polymerizing the amino acids delivered by tRNAs into a polypeptide chain. The nascent polypeptides leave the ribosome through a tunnel in the LSU and interact with protein factors that function in enzymatic processing, targeting, and the membrane insertion of nascent chains at the exit of the ribosomal tunnel. This Saccharomyces cerevisiae (strain ATCC 204508 / S288c) (Baker's yeast) protein is Large ribosomal subunit protein eL30.